Reading from the N-terminus, the 177-residue chain is Peptidyl-tRNA hydrolase (177 aa).

Residue tyrosine 12 participates in tRNA binding. The active-site Proton acceptor is histidine 17. Positions 63, 65, and 111 each coordinate tRNA.

Belongs to the PTH family. In terms of assembly, monomer.

The protein localises to the cytoplasm. It catalyses the reaction an N-acyl-L-alpha-aminoacyl-tRNA + H2O = an N-acyl-L-amino acid + a tRNA + H(+). Functionally, hydrolyzes ribosome-free peptidyl-tRNAs (with 1 or more amino acids incorporated), which drop off the ribosome during protein synthesis, or as a result of ribosome stalling. Catalyzes the release of premature peptidyl moieties from peptidyl-tRNA molecules trapped in stalled 50S ribosomal subunits, and thus maintains levels of free tRNAs and 50S ribosomes. In Buchnera aphidicola subsp. Acyrthosiphon pisum (strain 5A), this protein is Peptidyl-tRNA hydrolase.